The sequence spans 98 residues: Cytochrome c2 (98 aa).

Position 1 is a pyrrolidone carboxylic acid (Q1). Positions 10, 13, 14, and 76 each coordinate heme c.

The protein belongs to the cytochrome c family. In terms of processing, binds 1 heme c group covalently per subunit.

Its subcellular location is the periplasm. In terms of biological role, cytochrome c2 is found mainly in purple, non-sulfur, photosynthetic bacteria where it functions as the electron donor to the oxidized bacteriochlorophyll in the photophosphorylation pathway. However, it may also have a role in the respiratory chain and is found in some non-photosynthetic bacteria. The chain is Cytochrome c2 from Rhodoplanes tepidamans (Rhodoplanes cryptolactis).